The primary structure comprises 210 residues: Cell division protein SepF (210 aa).

Low complexity-rich tracts occupy residues 36 to 47 (QQQQTPAAVPTQ) and 59 to 69 (RASATTATTAS). Disordered stretches follow at residues 36–69 (QQQQ…TTAS) and 182–210 (NEMS…QMIQ).

The protein belongs to the SepF family. As to quaternary structure, homodimer. Interacts with FtsZ.

Its subcellular location is the cytoplasm. Its function is as follows. Cell division protein that is part of the divisome complex and is recruited early to the Z-ring. Probably stimulates Z-ring formation, perhaps through the cross-linking of FtsZ protofilaments. Its function overlaps with FtsA. This is Cell division protein SepF from Trichodesmium erythraeum (strain IMS101).